The primary structure comprises 152 residues: Transcriptional regulator MraZ (152 aa).

2 SpoVT-AbrB domains span residues 5–52 (ASAI…PVQE) and 81–124 (AHEC…DEAA).

Belongs to the MraZ family. Forms oligomers.

The protein resides in the cytoplasm. It localises to the nucleoid. In Shewanella piezotolerans (strain WP3 / JCM 13877), this protein is Transcriptional regulator MraZ.